Reading from the N-terminus, the 279-residue chain is Bifunctional protein FolD (279 aa).

NADP(+)-binding positions include 164–166 (GRS), S189, and I230.

It belongs to the tetrahydrofolate dehydrogenase/cyclohydrolase family. As to quaternary structure, homodimer.

It catalyses the reaction (6R)-5,10-methylene-5,6,7,8-tetrahydrofolate + NADP(+) = (6R)-5,10-methenyltetrahydrofolate + NADPH. The catalysed reaction is (6R)-5,10-methenyltetrahydrofolate + H2O = (6R)-10-formyltetrahydrofolate + H(+). The protein operates within one-carbon metabolism; tetrahydrofolate interconversion. In terms of biological role, catalyzes the oxidation of 5,10-methylenetetrahydrofolate to 5,10-methenyltetrahydrofolate and then the hydrolysis of 5,10-methenyltetrahydrofolate to 10-formyltetrahydrofolate. This is Bifunctional protein FolD from Agathobacter rectalis (strain ATCC 33656 / DSM 3377 / JCM 17463 / KCTC 5835 / VPI 0990) (Eubacterium rectale).